A 180-amino-acid polypeptide reads, in one-letter code: p-cumate 2,3-dioxygenase system, small oxygenase component (180 aa).

The protein belongs to the bacterial ring-hydroxylating dioxygenase beta subunit family. The p-cumate 2,3-dioxygenase multicomponent enzyme system is composed of an electron transfer component and a dioxygenase component (iron sulfur protein (ISP)). The electron transfer component is composed of a ferredoxin reductase (CmtAa) and a ferredoxin (CmtAd), and the dioxygenase component is formed of a large alpha subunit (CmtAb) and a small beta subunit (CmtAc).

It participates in aromatic compound metabolism; p-cumate degradation; acetaldehyde and pyruvate from p-cumate. Component of the p-cumate 2,3-dioxygenase multicomponent enzyme system which catalyzes the incorporation of both atoms of molecular oxygen into p-cumate to form cis-2,3-dihydroxy-2,3-dihydro-p-cumate. The beta subunit seems to have a structural role in the holoenzyme. Also able to catalyze the cis-dihydroxylation of indole-2-carboxylate and indole-3-carboxylate. The polypeptide is p-cumate 2,3-dioxygenase system, small oxygenase component (Pseudomonas putida (Arthrobacter siderocapsulatus)).